The following is a 539-amino-acid chain: E3 ubiquitin-protein ligase arc-1 (539 aa).

Residues 6-53 (CNVCNEEYSARDPLKCPRVLTGCGHTICHNCAISIAGRNSSIFCPFDR) form an RING-type zinc finger. The segment at 103–149 (LLNLECDEDSEHVAVIYCTVCDSNLCERCSESTHSTNVLSKHRRIPL) adopts a B box-type zinc-finger fold. The tract at residues 369-539 (ESRVVLLGLD…LSRLNGTCPV (171 aa)) is ARF-like. GTP contacts are provided by residues 376-383 (GLDGAGKT), 422-426 (DVGGL), and 481-484 (NRKD).

It in the C-terminal section; belongs to the small GTPase superfamily. Arf family.

The enzyme catalyses S-ubiquitinyl-[E2 ubiquitin-conjugating enzyme]-L-cysteine + [acceptor protein]-L-lysine = [E2 ubiquitin-conjugating enzyme]-L-cysteine + N(6)-ubiquitinyl-[acceptor protein]-L-lysine.. It participates in protein modification; protein ubiquitination. Functionally, acts as an E3 ubiquitin-protein ligase. In Caenorhabditis elegans, this protein is E3 ubiquitin-protein ligase arc-1 (arc-1).